A 661-amino-acid polypeptide reads, in one-letter code: Kyphoscoliosis peptidase (661 aa).

Positions 116–137 are disordered; sequence GDKNGNMRPRQPGGKDAHAYPW. Residues cysteine 225, histidine 267, and aspartate 282 contribute to the active site.

The protein belongs to the transglutaminase-like superfamily. As to quaternary structure, interacts with IGFN1 and FLNC. In terms of tissue distribution, specifically expressed in skeletal and cardiac muscle.

It is found in the cytoplasm. The protein resides in the cytoskeleton. It localises to the myofibril. The protein localises to the sarcomere. Its subcellular location is the z line. Functionally, probable cytoskeleton-associated protease required for normal muscle growth. Involved in function, maturation and stabilization of the neuromuscular junction. May act by cleaving muscle-specific proteins such as FLNC. In Mus musculus (Mouse), this protein is Kyphoscoliosis peptidase.